Reading from the N-terminus, the 179-residue chain is ATP synthase subunit delta (179 aa).

This sequence belongs to the ATPase delta chain family. As to quaternary structure, F-type ATPases have 2 components, F(1) - the catalytic core - and F(0) - the membrane proton channel. F(1) has five subunits: alpha(3), beta(3), gamma(1), delta(1), epsilon(1). F(0) has three main subunits: a(1), b(2) and c(10-14). The alpha and beta chains form an alternating ring which encloses part of the gamma chain. F(1) is attached to F(0) by a central stalk formed by the gamma and epsilon chains, while a peripheral stalk is formed by the delta and b chains.

The protein resides in the cell inner membrane. Its function is as follows. F(1)F(0) ATP synthase produces ATP from ADP in the presence of a proton or sodium gradient. F-type ATPases consist of two structural domains, F(1) containing the extramembraneous catalytic core and F(0) containing the membrane proton channel, linked together by a central stalk and a peripheral stalk. During catalysis, ATP synthesis in the catalytic domain of F(1) is coupled via a rotary mechanism of the central stalk subunits to proton translocation. In terms of biological role, this protein is part of the stalk that links CF(0) to CF(1). It either transmits conformational changes from CF(0) to CF(1) or is implicated in proton conduction. The protein is ATP synthase subunit delta of Burkholderia ambifaria (strain ATCC BAA-244 / DSM 16087 / CCUG 44356 / LMG 19182 / AMMD) (Burkholderia cepacia (strain AMMD)).